The sequence spans 801 residues: MQLLHLAILSPFLFAFIIPFLAKYAKRVHTGWFVLILPVLLFIYFLPMIRMTQSGETLRSVLEWIPSLGINFTVYIDGLGLLFALLITGIGSLVTLYSIFYLSKEKEQLGPFYVYLLMFMGAMLGVVLVDNVMVLYMFWELTSLSSFLLIGYWYKREKSRYGAAKSLLITVSGGLCMLGGFILLYLITDSFSIREMVHQVQLIAGHELFIPAMILILLGAFTKSAQFPFYIWLPDAMEAPTPVSAYLHSATMVKAGIYVIARFSPIFAFSAQWFWIVSLVGLFTMVWGSFHAVKQTDLKSILAFSTVSQLGMIISMLGVSAAALHYGHTEYYTVAAMAAIFHLINHATFKGSLFMAVGIIDHETGTRDIRKLGGLMAIMPITFTISLIGTFSMAGLPPFNGFLSKEMFFTSMLRVTHFDLFNVQTWGVLFPLFAWIGSVFTFIYSMKLLFKTFRGNYQPEQLEKQAHEAPVGMLVPPVILVALAVSLFFFPNILSYSLIEPAMNSIYPTLLDGHEKFHVHISQWHGVTTELLMTAGIVVIGTIGYLSLNKWKGIYKLFPSKLTLNRLYDKLLTMMEKGSYRVTKQYMTGFLRDYLLYIFAGFIILIGGAFAIKGGFSFKTEGMAKIGVYEIILTLVMISATVATVFARSRLTAIIALGVVGYTLALFFVIFRAPDLALTQLVIETISVALFLLCFYHLPKLRLKTKTRTFRMTNFIISLGVGVIVTLLGIASSSQRTKDSIASFFVKHSHDLGGGDNVVNVILVDFRGFDTMFEITVLTIAALGIYSMIKTKVKEEGKSGE.

The next 21 membrane-spanning stretches (helical) occupy residues 4–21 (LHLA…IPFL), 28–50 (VHTG…PMIR), 80–102 (GLLF…IFYL), 109–128 (LGPF…GVVL), 132–154 (VMVL…GYWY), 166–188 (SLLI…YLIT), 203–222 (IAGH…GAFT), 229–251 (FYIW…HSAT), 266–288 (IFAF…MVWG), 301–323 (ILAF…SAAA), 338–360 (AAIF…VGII), 372–394 (LGGL…FSMA), 428–450 (VLFP…KLLF), 471–493 (VGML…FPNI), 526–548 (GVTT…YLSL), 594–616 (YLLY…KGGF), 626–647 (IGVY…TVFA), 654–671 (IIAL…FVIF), 676–698 (LALT…FYHL), 710–732 (FRMT…GIAS), and 772–789 (MFEI…YSMI).

This sequence belongs to the CPA3 antiporters (TC 2.A.63) subunit A family. As to quaternary structure, forms a heterooligomeric complex that consists of seven subunits: MrpA, MrpB, MrpC, MrpD, MrpE, MrpF and MrpG.

It localises to the cell membrane. In terms of biological role, mrp complex is a Na(+)/H(+) antiporter that is considered to be the major Na(+) excretion system in B.subtilis. Has a major role in Na(+) resistance and a minor role in Na(+)- and K(+)-dependent pH homeostasis as compared to TetB. MrpA may be the actual Na(+)/H(+) antiporter, although the six other Mrp proteins are all required for Na(+)/H(+) antiport activity and Na(+) resistance. MrpA is required for initiation of sporulation when external Na(+) concentration increases. Also transports Li(+) but not K(+), Ca(2+) or Mg(2+). This Bacillus subtilis (strain 168) protein is Na(+)/H(+) antiporter subunit A (mrpA).